The primary structure comprises 224 residues: Ribonuclease HII (224 aa).

Positions M1–K210 constitute an RNase H type-2 domain. Residues D7, E8, and D105 each coordinate a divalent metal cation.

Belongs to the RNase HII family. Mn(2+) serves as cofactor. Requires Mg(2+) as cofactor.

The protein localises to the cytoplasm. It catalyses the reaction Endonucleolytic cleavage to 5'-phosphomonoester.. Endonuclease that specifically degrades the RNA of RNA-DNA hybrids. The chain is Ribonuclease HII from Thermococcus sibiricus (strain DSM 12597 / MM 739).